A 355-amino-acid polypeptide reads, in one-letter code: Protein RecA (355 aa).

Residue 67–74 (GPESSGKT) participates in ATP binding. The tract at residues 331–355 (NQDDKPDFTPAAHEVDEGSEAKENF) is disordered.

Belongs to the RecA family.

It is found in the cytoplasm. Its function is as follows. Can catalyze the hydrolysis of ATP in the presence of single-stranded DNA, the ATP-dependent uptake of single-stranded DNA by duplex DNA, and the ATP-dependent hybridization of homologous single-stranded DNAs. It interacts with LexA causing its activation and leading to its autocatalytic cleavage. The protein is Protein RecA of Erwinia tasmaniensis (strain DSM 17950 / CFBP 7177 / CIP 109463 / NCPPB 4357 / Et1/99).